The following is a 572-amino-acid chain: FAD-linked oxidoreductase patO (572 aa).

The signal sequence occupies residues 1 to 23 (MRLSIYSSILLLRAMCLVRPTFG). Residues N48, N71, N126, N180, N309, N354, N381, N422, N446, and N481 are each glycosylated (N-linked (GlcNAc...) asparagine). One can recognise an FAD-binding PCMH-type domain in the interval 115 to 295 (CAPGDMVVYS…YSMTVKAFPD (181 aa)).

It belongs to the oxygen-dependent FAD-linked oxidoreductase family. FAD is required as a cofactor.

It localises to the vacuole lumen. The protein operates within mycotoxin biosynthesis; patulin biosynthesis. Its function is as follows. FAD-linked oxidoreductase; part of the gene cluster that mediates the biosynthesis of patulin, an acetate-derived tetraketide mycotoxin produced by several fungal species that shows antimicrobial properties against several bacteria. PatO acts with patJ in the vacuole to convert gentisyl alcohol to isoepoxydon. The pathway begins with the synthesis of 6-methylsalicylic acid by the polyketide synthase (PKS) patK via condensation of acetate and malonate units. The 6-methylsalicylic acid decarboxylase patG then catalyzes the decarboxylation of 6-methylsalicylic acid to yield m-cresol (also known as 3-methylphenol). These first reactions occur in the cytosol. The intermediate m-cresol is then transported into the endoplasmic reticulum where the cytochrome P450 monooxygenase patH converts it to m-hydroxybenzyl alcohol, which is further converted to gentisyl alcohol by the cytochrome P450 monooxygenase patI. The oxidoreductases patJ and patO further convert gentisyl alcohol to isoepoxydon in the vacuole. PatN catalyzes then the transformation of isoepoxydon into phyllostine. The cluster protein patF is responsible for the conversion from phyllostine to neopatulin whereas the alcohol dehydrogenase patD converts neopatulin to E-ascladiol. The steps between isoepoxydon and E-ascladiol occur in the cytosol, and E-ascladiol is probably secreted to the extracellular space by one of the cluster-specific transporters patC or patM. Finally, the secreted patulin synthase patE catalyzes the conversion of E-ascladiol to patulin. In Aspergillus clavatus (strain ATCC 1007 / CBS 513.65 / DSM 816 / NCTC 3887 / NRRL 1 / QM 1276 / 107), this protein is FAD-linked oxidoreductase patO.